A 568-amino-acid polypeptide reads, in one-letter code: Protein KATNIP homolog (568 aa).

Residues 1-20 show a composition bias toward basic and acidic residues; that stretch reads MSDSDLKEIEKNAENIKLEP. The tract at residues 1 to 30 is disordered; that stretch reads MSDSDLKEIEKNAENIKLEPAEDEVNEEDQ. Residues 21 to 30 show a composition bias toward acidic residues; that stretch reads AEDEVNEEDQ.

As to expression, expressed in most ciliated neuronal cells. Not expressed in non-ciliated cells.

It localises to the cytoplasm. The protein resides in the cytoskeleton. The protein localises to the cilium axoneme. It is found in the cilium basal body. Functionally, may regulate ciliary A-tubule number and, along with arl-13, controls cilium integrity. This is Protein KATNIP homolog from Caenorhabditis elegans.